The chain runs to 178 residues: Translation initiation factor IF-3 (178 aa).

Belongs to the IF-3 family. In terms of assembly, monomer.

The protein resides in the cytoplasm. IF-3 binds to the 30S ribosomal subunit and shifts the equilibrium between 70S ribosomes and their 50S and 30S subunits in favor of the free subunits, thus enhancing the availability of 30S subunits on which protein synthesis initiation begins. The chain is Translation initiation factor IF-3 from Ralstonia nicotianae (strain ATCC BAA-1114 / GMI1000) (Ralstonia solanacearum).